We begin with the raw amino-acid sequence, 396 residues long: Tryptophan synthase beta chain (396 aa).

At Lys-86 the chain carries N6-(pyridoxal phosphate)lysine.

Belongs to the TrpB family. As to quaternary structure, tetramer of two alpha and two beta chains. It depends on pyridoxal 5'-phosphate as a cofactor.

It carries out the reaction (1S,2R)-1-C-(indol-3-yl)glycerol 3-phosphate + L-serine = D-glyceraldehyde 3-phosphate + L-tryptophan + H2O. It participates in amino-acid biosynthesis; L-tryptophan biosynthesis; L-tryptophan from chorismate: step 5/5. Functionally, the beta subunit is responsible for the synthesis of L-tryptophan from indole and L-serine. This Francisella philomiragia subsp. philomiragia (strain ATCC 25017 / CCUG 19701 / FSC 153 / O#319-036) protein is Tryptophan synthase beta chain.